The primary structure comprises 2063 residues: Rho guanine nucleotide exchange factor 17 (2063 aa).

4 disordered regions span residues 22 to 365, 380 to 466, 485 to 581, and 602 to 958; these read WSGG…MSDS, YLAS…SNPD, LRVR…AEED, and IQRM…RHVR. Residues 65-76 are compositionally biased toward low complexity; it reads PLAAPAQPRPLR. Residues 87-96 show a composition bias toward basic and acidic residues; that stretch reads RRFDAPRLDD. The segment covering 108–122 has biased composition (low complexity); sequence PAAAEEAAEGPARGA. Residues Ser-142 and Ser-152 each carry the phosphoserine modification. Over residues 225–250 the composition is skewed to low complexity; that stretch reads AGARASCSSSSIAASYPVSRSRAASS. Ser-310 bears the Phosphoserine mark. Positions 313-323 are enriched in polar residues; the sequence is LNLSSMNSAGV. 7 positions are modified to phosphoserine: Ser-326, Ser-332, Ser-383, Ser-387, Ser-395, Ser-410, and Ser-420. Over residues 388–397 the composition is skewed to polar residues; that stretch reads RGSSRYSSTE. The segment covering 445 to 456 has biased composition (basic and acidic residues); the sequence is ALRDGGFEPEKS. Phosphoserine is present on residues Ser-461 and Ser-546. Positions 562 to 573 are enriched in low complexity; sequence SALKSSSSELLL. Ser-619 bears the Phosphoserine mark. Polar residues predominate over residues 671 to 680; the sequence is LSSSSAQTNH. At Ser-696 the chain carries Phosphoserine. Phosphothreonine is present on residues Thr-699 and Thr-702. Phosphoserine is present on Ser-735. The span at 754–765 shows a compositional bias: polar residues; sequence SVDSNLLGSLSP. Residues 827–836 show a composition bias toward basic and acidic residues; the sequence is SLSDPSRRGE. At Ser-914 the chain carries Phosphoserine. Positions 917–928 are enriched in basic residues; it reads LIRRGSKKRPAR. Positions 930–939 are enriched in basic and acidic residues; the sequence is SHQELRRDEG. Phosphoserine is present on residues Ser-961 and Ser-1002. The tract at residues 1034 to 1060 is disordered; that stretch reads APPSAEAKPPEAARPADEPTPASKCCS. Residues 1041-1050 are compositionally biased toward basic and acidic residues; sequence KPPEAARPAD. In terms of domain architecture, DH spans 1066-1254; that stretch reads MRKHVAMTLL…KQVAERINKG (189 aa). At Ser-1331 the chain carries Phosphoserine. Disordered stretches follow at residues 1564–1584, 1616–1719, 1991–2020, and 2036–2055; these read HREP…PAGP, GLEM…SSHG, TPPP…PAPA, and FRLS…DDST. Residues 1568–1582 are compositionally biased toward pro residues; it reads PPSLRSPPETAPEPA. The segment covering 1644-1680 has biased composition (low complexity); sequence SPSPSGTLQSQASRSTISSSFGNEETPSSKEATAETT. Residues 2004–2013 show a composition bias toward basic and acidic residues; sequence PSLEHRDSPW.

Highly expressed in the heart.

Functionally, acts as a guanine nucleotide exchange factor (GEF) for RhoA GTPases. This chain is Rho guanine nucleotide exchange factor 17 (ARHGEF17), found in Homo sapiens (Human).